The chain runs to 432 residues: Enolase (432 aa).

Glutamine 164 contributes to the (2R)-2-phosphoglycerate binding site. Glutamate 206 acts as the Proton donor in catalysis. Aspartate 243, glutamate 289, and aspartate 316 together coordinate Mg(2+). (2R)-2-phosphoglycerate is bound by residues lysine 341, arginine 370, serine 371, and lysine 392. Lysine 341 (proton acceptor) is an active-site residue.

It belongs to the enolase family. It depends on Mg(2+) as a cofactor.

It localises to the cytoplasm. The protein resides in the secreted. It is found in the cell surface. It carries out the reaction (2R)-2-phosphoglycerate = phosphoenolpyruvate + H2O. The protein operates within carbohydrate degradation; glycolysis; pyruvate from D-glyceraldehyde 3-phosphate: step 4/5. Its function is as follows. Catalyzes the reversible conversion of 2-phosphoglycerate (2-PG) into phosphoenolpyruvate (PEP). It is essential for the degradation of carbohydrates via glycolysis. The sequence is that of Enolase from Borrelia duttonii (strain Ly).